The sequence spans 646 residues: Threonine--tRNA ligase (646 aa).

The TGS domain maps to 1-61 (MIKITFPDGS…NEDADFVLYK (61 aa)). A catalytic region spans residues 242–541 (DHRKIGKEMQ…LIEHTAGKFP (300 aa)). Positions 337, 388, and 518 each coordinate Zn(2+).

The protein belongs to the class-II aminoacyl-tRNA synthetase family. As to quaternary structure, homodimer. It depends on Zn(2+) as a cofactor.

Its subcellular location is the cytoplasm. It catalyses the reaction tRNA(Thr) + L-threonine + ATP = L-threonyl-tRNA(Thr) + AMP + diphosphate + H(+). Its function is as follows. Catalyzes the attachment of threonine to tRNA(Thr) in a two-step reaction: L-threonine is first activated by ATP to form Thr-AMP and then transferred to the acceptor end of tRNA(Thr). Also edits incorrectly charged L-seryl-tRNA(Thr). This Bacteroides thetaiotaomicron (strain ATCC 29148 / DSM 2079 / JCM 5827 / CCUG 10774 / NCTC 10582 / VPI-5482 / E50) protein is Threonine--tRNA ligase.